The sequence spans 100 residues: Nucleoid-associated protein Cagg_3200 (100 aa).

The protein belongs to the YbaB/EbfC family. In terms of assembly, homodimer.

It is found in the cytoplasm. It localises to the nucleoid. Its function is as follows. Binds to DNA and alters its conformation. May be involved in regulation of gene expression, nucleoid organization and DNA protection. In Chloroflexus aggregans (strain MD-66 / DSM 9485), this protein is Nucleoid-associated protein Cagg_3200.